We begin with the raw amino-acid sequence, 454 residues long: uncharacterized protein (454 aa).

Residues 364-405 (CSRPGCDAPAYHSEVHHVTPWTTTHRTDINDLTLACGPDNRL) form the HNH domain.

The protein belongs to the Rv1128c/1148c/1588c/1702c/1945/3466 family.

This is an uncharacterized protein from Mycobacterium tuberculosis (strain CDC 1551 / Oshkosh).